We begin with the raw amino-acid sequence, 425 residues long: Dual-specificity RNA methyltransferase RlmN (425 aa).

Residue E136 is the Proton acceptor of the active site. A Radical SAM core domain is found at G142–L389. A disulfide bridge links C149 with C392. Residues C156, C160, and C163 each coordinate [4Fe-4S] cluster. S-adenosyl-L-methionine-binding positions include G218–E219, S250, S272–H274, and N349. C392 serves as the catalytic S-methylcysteine intermediate.

Belongs to the radical SAM superfamily. RlmN family. Requires [4Fe-4S] cluster as cofactor.

It is found in the cytoplasm. It carries out the reaction adenosine(2503) in 23S rRNA + 2 reduced [2Fe-2S]-[ferredoxin] + 2 S-adenosyl-L-methionine = 2-methyladenosine(2503) in 23S rRNA + 5'-deoxyadenosine + L-methionine + 2 oxidized [2Fe-2S]-[ferredoxin] + S-adenosyl-L-homocysteine. The catalysed reaction is adenosine(37) in tRNA + 2 reduced [2Fe-2S]-[ferredoxin] + 2 S-adenosyl-L-methionine = 2-methyladenosine(37) in tRNA + 5'-deoxyadenosine + L-methionine + 2 oxidized [2Fe-2S]-[ferredoxin] + S-adenosyl-L-homocysteine. In terms of biological role, specifically methylates position 2 of adenine 2503 in 23S rRNA and position 2 of adenine 37 in tRNAs. m2A2503 modification seems to play a crucial role in the proofreading step occurring at the peptidyl transferase center and thus would serve to optimize ribosomal fidelity. The polypeptide is Dual-specificity RNA methyltransferase RlmN (Methylorubrum populi (strain ATCC BAA-705 / NCIMB 13946 / BJ001) (Methylobacterium populi)).